The chain runs to 316 residues: Pentatricopeptide repeat-containing protein At1g19525 (316 aa).

PPR repeat units follow at residues 9–43 (DILTATALVHMYSKSGNFERATEAFENLKSYGLRP), 44–78 (DEKIYEAMILGYVNAGKPKLGERLMKEMQAKELKA), 79–113 (SEEVYMALLRAYAQMGDANGAAGISSSMQYASDGP), 115–149 (SFEAYSLFVEAYGKAGQVDKAKSNFDEMRKLGHKP), 150–184 (DDKCIANLVRAYKGENSLDKALRLLLQLEKDGIEI), and 185–219 (GVITYTVLVDWMANLGLIEEAEQLLVKISQLGEAP).

This sequence belongs to the PPR family. P subfamily.

The sequence is that of Pentatricopeptide repeat-containing protein At1g19525 from Arabidopsis thaliana (Mouse-ear cress).